A 501-amino-acid polypeptide reads, in one-letter code: Histone deacetylase 19 (501 aa).

The interval 17–329 is histone deacetylase; that stretch reads RKVCYFYDPE…WCYETGVALG (313 aa). Residue His-149 is the Proton donor/acceptor of the active site. Residues Asp-184, His-186, and Asp-272 each contribute to the Zn(2+) site. Positions 383-501 are disordered; sequence HAPSVPFQER…GAEQAFPPKT (119 aa). Acidic residues predominate over residues 397–407; sequence ETPEVDEDQED. Phosphoserine is present on Ser-416. Composition is skewed to basic and acidic residues over residues 422–457 and 479–488; these read DDRK…KGCE and ASVKMEEEGT.

The protein belongs to the histone deacetylase family. HD type 1 subfamily. Interacts with SIN3, SAP18 and TPR1. Interacts with CDKE-1, MED14 and LUG. Interacts with TPL. Interacts with AHL22. Zn(2+) serves as cofactor. Highly expressed in leaves, stems, flowers and young siliques.

The protein resides in the nucleus. It carries out the reaction N(6)-acetyl-L-lysyl-[histone] + H2O = L-lysyl-[histone] + acetate. Responsible for the deacetylation of lysine residues on the N-terminal part of the core histones (H2A, H2B, H3 and H4). Histone deacetylation gives a tag for epigenetic repression and plays an important role in transcriptional regulation, cell cycle progression and developmental events. Histone deacetylases act via the formation of large multiprotein complexes. HDA19 is involved in jasmonic acid and ethylene signaling of pathogen response. Part of a repressor complex including APETALA2 (AP2) and TOPLESS (TPL) that control the expression domains of numerous floral organ identity genes. Involved in negative regulation of salinity stress response. Represses the expression of stress tolerance-related genes, genes coding for late embryogenesis abundant (LEA) proteins that prevent protein aggregation, and positive regulators of abscisic acid (ABA) signaling, such as ABI5 and NAC019. The sequence is that of Histone deacetylase 19 from Arabidopsis thaliana (Mouse-ear cress).